The chain runs to 138 residues: Putative pre-16S rRNA nuclease (138 aa).

It belongs to the YqgF nuclease family.

Its subcellular location is the cytoplasm. In terms of biological role, could be a nuclease involved in processing of the 5'-end of pre-16S rRNA. The polypeptide is Putative pre-16S rRNA nuclease (Clostridium beijerinckii (strain ATCC 51743 / NCIMB 8052) (Clostridium acetobutylicum)).